Reading from the N-terminus, the 423-residue chain is Histidine--tRNA ligase (423 aa).

The protein belongs to the class-II aminoacyl-tRNA synthetase family. In terms of assembly, homodimer.

It localises to the cytoplasm. It carries out the reaction tRNA(His) + L-histidine + ATP = L-histidyl-tRNA(His) + AMP + diphosphate + H(+). This chain is Histidine--tRNA ligase, found in Geobacillus sp. (strain WCH70).